Reading from the N-terminus, the 86-residue chain is Cytochrome c oxidase subunit 3 (86 aa).

The Mitochondrial matrix portion of the chain corresponds to 1-15 (MAHQAHSYHMVDPSP). A helical membrane pass occupies residues 16–34 (WPIFGAAAALLTTSGLVMW). Over 35–40 (FHYNSS) the chain is Mitochondrial intermembrane. Residues 41-66 (ILLAAGLLSMLLVMLQWWREIVREST) traverse the membrane as a helical segment. Topologically, residues 67 to 86 (FQGHHTPTVQKGLRYGMILF) are mitochondrial matrix.

Belongs to the cytochrome c oxidase subunit 3 family. In terms of assembly, component of the cytochrome c oxidase (complex IV, CIV), a multisubunit enzyme composed of 14 subunits. The complex is composed of a catalytic core of 3 subunits MT-CO1, MT-CO2 and MT-CO3, encoded in the mitochondrial DNA, and 11 supernumerary subunits COX4I, COX5A, COX5B, COX6A, COX6B, COX6C, COX7A, COX7B, COX7C, COX8 and NDUFA4, which are encoded in the nuclear genome. The complex exists as a monomer or a dimer and forms supercomplexes (SCs) in the inner mitochondrial membrane with NADH-ubiquinone oxidoreductase (complex I, CI) and ubiquinol-cytochrome c oxidoreductase (cytochrome b-c1 complex, complex III, CIII), resulting in different assemblies (supercomplex SCI(1)III(2)IV(1) and megacomplex MCI(2)III(2)IV(2)).

Its subcellular location is the mitochondrion inner membrane. It carries out the reaction 4 Fe(II)-[cytochrome c] + O2 + 8 H(+)(in) = 4 Fe(III)-[cytochrome c] + 2 H2O + 4 H(+)(out). Component of the cytochrome c oxidase, the last enzyme in the mitochondrial electron transport chain which drives oxidative phosphorylation. The respiratory chain contains 3 multisubunit complexes succinate dehydrogenase (complex II, CII), ubiquinol-cytochrome c oxidoreductase (cytochrome b-c1 complex, complex III, CIII) and cytochrome c oxidase (complex IV, CIV), that cooperate to transfer electrons derived from NADH and succinate to molecular oxygen, creating an electrochemical gradient over the inner membrane that drives transmembrane transport and the ATP synthase. Cytochrome c oxidase is the component of the respiratory chain that catalyzes the reduction of oxygen to water. Electrons originating from reduced cytochrome c in the intermembrane space (IMS) are transferred via the dinuclear copper A center (CU(A)) of subunit 2 and heme A of subunit 1 to the active site in subunit 1, a binuclear center (BNC) formed by heme A3 and copper B (CU(B)). The BNC reduces molecular oxygen to 2 water molecules using 4 electrons from cytochrome c in the IMS and 4 protons from the mitochondrial matrix. This Anas platyrhynchos (Mallard) protein is Cytochrome c oxidase subunit 3 (MT-CO3).